We begin with the raw amino-acid sequence, 277 residues long: Inositol monophosphatase 1 (277 aa).

Positions 70, 90, 92, and 93 each coordinate Mg(2+). E70 contributes to the substrate binding site. 92–95 (IDGT) contributes to the substrate binding site. T168 is subject to Phosphothreonine. Substrate-binding positions include 194 to 196 (GTA), E213, and D220. D220 contacts Mg(2+).

Belongs to the inositol monophosphatase superfamily. As to quaternary structure, homodimer. It depends on Mg(2+) as a cofactor.

Its subcellular location is the cytoplasm. The enzyme catalyses a myo-inositol phosphate + H2O = myo-inositol + phosphate. It carries out the reaction 1D-myo-inositol 1-phosphate + H2O = myo-inositol + phosphate. It catalyses the reaction 1D-myo-inositol 2-phosphate + H2O = myo-inositol + phosphate. The catalysed reaction is 1D-myo-inositol 3-phosphate + H2O = myo-inositol + phosphate. The enzyme catalyses 1D-myo-inositol 4-phosphate + H2O = myo-inositol + phosphate. It carries out the reaction 1D-myo-inositol 5-phosphate + H2O = myo-inositol + phosphate. It catalyses the reaction 1D-myo-inositol 6-phosphate + H2O = myo-inositol + phosphate. The catalysed reaction is scyllo-inositol 1-phosphate + H2O = scyllo-inositol + phosphate. The enzyme catalyses alpha-D-galactose 1-phosphate + H2O = D-galactose + phosphate. It carries out the reaction alpha-D-glucose 1-phosphate + H2O = D-glucose + phosphate. It catalyses the reaction D-glucose 6-phosphate + H2O = D-glucose + phosphate. The catalysed reaction is beta-D-fructose 1-phosphate + H2O = D-fructose + phosphate. The enzyme catalyses glycerol 2-phosphate + H2O = glycerol + phosphate. It carries out the reaction adenosine 2'-phosphate + H2O = adenosine + phosphate. It participates in polyol metabolism; myo-inositol biosynthesis; myo-inositol from D-glucose 6-phosphate: step 2/2. Its activity is regulated as follows. Inhibited by Li(+), Ca(2+) and Mn(2+), but also by Mg(2+) at concentrations above 3 mM. In terms of biological role, phosphatase involved in the dephosphorylation of myo-inositol monophosphate to generate myo-inositol. Is also able to dephosphorylate scyllo-inositol-phosphate, myo-inositol 1,4-diphosphate, scyllo-inositol-1,3-diphosphate and scyllo-inositol-1,4-diphosphate. Also dephosphorylates in vitro other sugar-phosphates including D-galactose-1-phosphate, glucose-1-phosphate, glucose-6-phosphate, fructose-1-phosphate, beta-glycerophosphate and 2'-AMP. Responsible for the provision of inositol required for synthesis of phosphatidylinositol and polyphosphoinositides, and involved in maintaining normal brain function. Has been implicated as the pharmacological target for lithium Li(+) action in brain. In Pongo abelii (Sumatran orangutan), this protein is Inositol monophosphatase 1 (IMPA1).